The following is a 308-amino-acid chain: Serine/threonine-protein phosphatase 4 catalytic subunit (308 aa).

Mn(2+) contacts are provided by Asp-51, His-53, Asp-79, and Asn-111. The active-site Proton donor is His-112. Residues His-161 and His-235 each contribute to the Mn(2+) site.

The protein belongs to the PPP phosphatase family. PP-4 (PP-X) subfamily. As to quaternary structure, catalytic subunit of the histone H2A phosphatase complex (HTP-C) containing PPH3, PSY2 and PSY4. Inactivated in a complex with phosphatase methylesterase PPE1 (PP2Ai). Interacts with phosphatase 2A activator RRD1, which can reactivate PP2Ai by dissociating the catalytic subunit from the complex. Interacts with SPT5 and TAP42. It depends on Mn(2+) as a cofactor. Reversibly methyl esterified on Leu-308 by leucine carboxyl methyltransferase 1 (PPM1) and protein phosphatase methylesterase 1 (PPE1). Carboxyl methylation influences the affinity of the catalytic subunit for the different regulatory subunits, thereby modulating the PP2A holoenzyme's substrate specificity, enzyme activity and cellular localization.

The protein localises to the cytoplasm. It localises to the nucleus. The catalysed reaction is O-phospho-L-seryl-[protein] + H2O = L-seryl-[protein] + phosphate. It catalyses the reaction O-phospho-L-threonyl-[protein] + H2O = L-threonyl-[protein] + phosphate. Forms the histone H2A phosphatase complex in association with the regulatory subunits PSY2 and PSY4, which dephosphorylates H2AS128ph (gamma-H2A) that has been displaced from sites of DNA lesions in the double-stranded DNA break repair process. Dephosphorylation is necessary for efficient recovery from the DNA damage checkpoint. PPH3 is directly involved in the dephosphorylation and activation of the transcription factor GLN3 in response to nutrient availability. The chain is Serine/threonine-protein phosphatase 4 catalytic subunit (PPH3) from Saccharomyces cerevisiae (strain ATCC 204508 / S288c) (Baker's yeast).